An 866-amino-acid chain; its full sequence is Protein aubergine (866 aa).

N-acetylmethionine is present on Met1. The segment at 1-61 is disordered; sequence MNLPPNPVIA…GGGDAQVGPS (61 aa). Arg11, Arg13, Arg15, and Arg17 each carry symmetric dimethylarginine. Residues 46 to 56 show a composition bias toward gly residues; it reads ASGGNGGGGDA. The PAZ domain occupies 281–390; it reads TLYNILSDAI…IIPELARATG (110 aa). The Piwi domain maps to 555-852; sequence IVMVVMRSPN…LAFLVAESIN (298 aa).

It belongs to the argonaute family. Piwi subfamily. Component of the ping-pong piRNA processing (4P) complex consisting of krimp, aub and AGO3. Interacts (via N-terminus when symmetrically dimethylated on arginine residues) with krimp (via tudor domain); this interaction requires methylation of at least one N-terminal arginie residue. Interacts with vas and AGO3. May form part of a piRNA processing complex consisting of tud, aub and AGO3. Interacts (when symmetrically dimethylated on arginine residues) with tud; methylation and/or interaction requires association with piRNA. Interacts (via N-terminus and when associated with piRNA) with csul/PRMT5; the interaction recruits the PRMT5 methylosome complex to modify N-terminal arginines by symmetrical dimethylation but involves residues other than the arginines to be modified. Forms a complex with smg, twin, AGO3, nanos mRNA and piRNAs that targets the nanos 3'-untranslated region, in early embryos. Interacts with nanos mRNA and rump (in an RNA-dependent manner). Interacts with papi and vret. Interacts with me31B. Symmetrical dimethylation of arginines (sDMA) on Arg-11, Arg-13 and/or Arg-15 by csul/PRMT5/DART5, is required for binding to tud, localization to the pole plasm and association with the correct piRNAs. SDMA on Arg-11, Arg-13, Arg-15 and/or Arg-17 is required for binding to krimp and stable recruitment to subregions of the nuage. Methylation state does not affect protein stability. SDMA plays an important role in ping-pong amplification of piRNAs and is essential for function in vivo. Methylation state functions as an indicator of its piRNA binding state. PiRNA binding promotes sDMA modification; piRNA binding induces a conformational change that exposes the N-terminal arginines, making them available to the methylosome complex. In terms of tissue distribution, expressed in ovary. In the germarium, found in germline stem and cyst cells. In egg chambers from stage 6, expressed both in nurse cells and oocytes. In embryos, accumulates in the pole cells, although low expression is detected throughout the entire embryo. In testis, expressed in germline stem cells, gonialblast and spermatogonia cells (at protein level). In the adult brain, expressed in the ellipsoid body, the mushroom body subdivision in the peduncle and the cell body layer. Expressed specifically in alpha'/beta' and gamma neurons.

The protein localises to the cytoplasm. The protein resides in the cytosol. It localises to the perinuclear region. Its subcellular location is the cytoplasmic ribonucleoprotein granule. Functionally, component of the perinuclear meiotic nuage, a germline-specific subcellular membraneless ribonucleoprotein compartment involved in production of transposable element-repressing Piwi-interacting RNA (piRNA)-induced silencing complexes (piRISCs), which are essential for maintaining germline integrity during oogenesis; essential for the formation and/or structural integrity of nuage particles. Acts via the Piwi-interacting RNA (piRNA) metabolic process, which mediates the repression of transposable elements during meiosis by forming complexes composed of piRNAs and Piwi proteins and governs the methylation and subsequent repression of transposons. Directly binds piRNAs, a class of 24 to 30 nucleotide RNAs that are generated by a Dicer-independent mechanism and are primarily derived from transposons and other repeated sequence elements. Shows RNA cleavage or slicer activity; including aub-piRNA complexes from ovary and testis. When loaded with guide piRNAs recognizes and cleaves complementary RNAs to repress their expression and produce complementary piRNAs. Together with Piwi protein AGO3 recruited to subregions of the perinuclear nuage by krimp, which coordinates their activity in the ping-pong amplification step of secondary piRNA biogenesis. Krimp recruits piRNA bound aub and unbound AGO3, bringing them into close proximity to facilitate the loading onto AGO3 of freshly cut piRNAs generated by aub cleavage of target sequences; krimp recognizes the piRNA loading state of the Piwi proteins via symmetrically dimethylated arginine modification in their N-terminus. Important for asymmetric ping-pong amplification to bias production towards antisense piRNAs capable of silencing transposable elements. Required for the localization of mael and krimp to the meiotic nuage. In ovary, associates predominantly with antisense piRNAs that contain uridine at their 5' end. In testis, associates with Su(Ste) antisense piRNAs (most abundant class of piRNAs found in complex with aub in testes) and negatively regulates Ste expression, most likely by cleaving its transcripts. Also in testis, may repress translation of vas when associated with a piRNA derived from chromosome X, termed AT-chX-1, whose sequence shows strong complementarity to vas mRNA. Involved in repression of long interspersed nuclear elements (LINEs) including HeT-A, I-element and TART LINEs. Repression of specialized telomeric retroelements HeT-A and TART is involved in telomere regulation; Drosophila telomeres being maintained by transposition of specialized telomeric retroelements. Also involved in telomeric trans-silencing, a repression mechanism by which a transposon or a transgene inserted in subtelomeric heterochromatin has the capacity to repress in trans, in the female germline, a homologous transposon, or transgene located in euchromatin. Involved in the suppression of meiotic drive of sex chromosomes and autosomes. Involved in transposon silencing in the adult brain. Required for dorsal-ventral as well as anterior-posterior patterning of the egg. Required during oogenesis for primordial germ cell formation and activation of RNA interference. During early oogenesis, required for osk mRNA silencing and polarization of the microtubule cytoskeleton. During mid-oogenesis, required for osk mRNA localization to the posterior pole and efficient translation of osk and grk. During embryogenesis, required for posterior localization of nanos (nos) mRNA, independently of osk, and pole cell formation. Forms a complex with smg, twin, AGO3 and specific piRNAs that targets nanos mRNA (and probably other maternal mRNAS) for deadenylation promoting its decay during early embryogenesis. This chain is Protein aubergine, found in Drosophila melanogaster (Fruit fly).